A 297-amino-acid polypeptide reads, in one-letter code: Oxidoreductase R1 (297 aa).

The protein belongs to the asaB hydroxylase/desaturase family.

The protein operates within secondary metabolite biosynthesis. In terms of biological role, oxidoreductase; part of the gene cluster that mediates the biosynthesis of squalestatin S1 (SQS1, also known as zaragozic acid A), a heavily oxidized fungal polyketide that offers potent cholesterol lowering activity by targeting squalene synthase (SS). SQS1 is composed of a 2,8-dioxobicyclic[3.2.1]octane-3,4,5-tricarboxyclic acid core that is connected to two lipophilic polyketide arms. These initial steps feature the priming of an unusual benzoic acid starter unit onto the highly reducing polyketide synthase pks2, followed by oxaloacetate extension and product release to generate a tricarboxylic acid containing product. The phenylalanine ammonia lyase (PAL) M7 and the acyl-CoA ligase M9 are involved in transforming phenylalanine into benzoyl-CoA. The citrate synthase-like protein R3 is involved in connecting the C-alpha-carbons of the hexaketide chain and oxaloacetate to afford the tricarboxylic acid unit. The potential hydrolytic enzymes, M8 and M10, are in close proximity to pks2 and may participate in product release. On the other side, the tetraketide arm is synthesized by a the squalestatin tetraketide synthase pks1 and enzymatically esterified to the core in the last biosynthetic step, by the acetyltransferase M4. The biosynthesis of the tetraketide must involve 3 rounds of chain extension. After the first and second rounds methyl-transfer occurs, and in all rounds of extension the ketoreductase and dehydratase are active. The enoyl reductase and C-MeT of pks1 are not active in the final round of extension. The acetyltransferase M4 appears to have a broad substrate selectivity for its acyl CoA substrate, allowing the in vitro synthesis of novel squalestatins. The biosynthesis of SQS1 requires several oxidative steps likely performed by oxidoreductases M1, R1 and R2. Finally, in support of the identification of the cluster as being responsible for SQS1 production, the cluster contains a gene encoding a putative squalene synthase (SS) R6, suggesting a likely mechanism for self-resistance. The protein is Oxidoreductase R1 of Phoma sp. (strain ATCC 20986 / MF5453).